Consider the following 126-residue polypeptide: DNA-directed RNA polymerase 35 kDa subunit (126 aa).

Belongs to the poxviridae DNA-directed RNA polymerase 35 kDa subunit family. In terms of assembly, the DNA-dependent RNA polymerase used for intermediate and late genes expression consists of eight subunits 147 kDa, 133 kDa, 35 kDa, 30 kDa, 22 kDa, 19 kDa, 18 kDa and 7 kDa totalling more than 500 kDa in mass. The same holoenzyme, with the addition of the transcription-specificity factor RAP94, is used for early gene expression.

The protein localises to the virion. The enzyme catalyses RNA(n) + a ribonucleoside 5'-triphosphate = RNA(n+1) + diphosphate. Functionally, part of the DNA-dependent RNA polymerase which catalyzes the transcription of viral DNA into RNA using the four ribonucleoside triphosphates as substrates. Responsible for the transcription of early, intermediate and late genes. DNA-dependent RNA polymerase associates with the early transcription factor (ETF) thereby allowing the early genes transcription. Late transcription, and probably also intermediate transcription, require newly synthesized RNA polymerase. In Ovis aries (Sheep), this protein is DNA-directed RNA polymerase 35 kDa subunit (RPO35).